We begin with the raw amino-acid sequence, 640 residues long: Threonine--tRNA ligase (640 aa).

The 61-residue stretch at 1 to 61 (MPIIALPDGN…EKDSEVNIIT (61 aa)) folds into the TGS domain. The segment at 242-533 (DHRRIAKQMS…LIEHYAGRLP (292 aa)) is catalytic. 3 residues coordinate Zn(2+): C333, H384, and H510.

Belongs to the class-II aminoacyl-tRNA synthetase family. In terms of assembly, homodimer. Zn(2+) serves as cofactor.

The protein localises to the cytoplasm. It catalyses the reaction tRNA(Thr) + L-threonine + ATP = L-threonyl-tRNA(Thr) + AMP + diphosphate + H(+). In terms of biological role, catalyzes the attachment of threonine to tRNA(Thr) in a two-step reaction: L-threonine is first activated by ATP to form Thr-AMP and then transferred to the acceptor end of tRNA(Thr). Also edits incorrectly charged L-seryl-tRNA(Thr). This Prochlorococcus marinus (strain MIT 9313) protein is Threonine--tRNA ligase.